A 385-amino-acid polypeptide reads, in one-letter code: Eukaryotic translation initiation factor 3 subunit M (385 aa).

Positions 180–342 (NSELASKVMI…RKVHISSTMH (163 aa)) constitute a PCI domain.

This sequence belongs to the eIF-3 subunit M family. In terms of assembly, component of the eukaryotic translation initiation factor 3 (eIF-3) complex.

The protein resides in the cytoplasm. Component of the eukaryotic translation initiation factor 3 (eIF-3) complex, which is involved in protein synthesis of a specialized repertoire of mRNAs and, together with other initiation factors, stimulates binding of mRNA and methionyl-tRNAi to the 40S ribosome. The eIF-3 complex specifically targets and initiates translation of a subset of mRNAs involved in cell proliferation. The protein is Eukaryotic translation initiation factor 3 subunit M of Anopheles gambiae (African malaria mosquito).